We begin with the raw amino-acid sequence, 178 residues long: GTP-dependent dephospho-CoA kinase (178 aa).

Residues Asp48, Ile49, Asp67, Lys69, and Glu126 each coordinate GTP.

Belongs to the GTP-dependent DPCK family.

The enzyme catalyses 3'-dephospho-CoA + GTP = GDP + CoA + H(+). It participates in cofactor biosynthesis; coenzyme A biosynthesis. Catalyzes the GTP-dependent phosphorylation of the 3'-hydroxyl group of dephosphocoenzyme A to form coenzyme A (CoA). In Methanothrix thermoacetophila (strain DSM 6194 / JCM 14653 / NBRC 101360 / PT) (Methanosaeta thermophila), this protein is GTP-dependent dephospho-CoA kinase.